A 680-amino-acid chain; its full sequence is MENKFKRTTVTSALPYANGPVHIGHLAGVYVPADIYVRYLRLKKEDVLFIGGSDEHGVPITIRAKKEGITPQDVVDRYHTLIKESFKEFGISFDIYSRTTSKTHHELASEFFKTLYDKGEFIEKTSMQYYDEEAHQFLADRYITGECPHCHAEGAYGDQCEKCGTSLSPTDLINPKSAISGSKPVMRETKHWYLPLDKHEGWLREWILENHKEWRPNVYGQCKSWLDMGLQPRAVSRDLDWGIPVPVEGAEGKVLYVWFDAPIGYISNTKELLPDSWETWWKDPETRLIHFIGKDNIVFHCIVFPAMLKAEGSYILPDNVPSNEFLNLEGDKISTSRNWAVWLHEYLQDFPGKQDVLRYVLTANAPETKDNDFTWKDFQARNNNELVAVYGNFVNRALVLTHKYFDGKVPVCGELTDYDKETLKEFADVKAEVEKLLDVFKFRDAQKEAMNLARIGNKYLADTEPWKLAKTDMDRVATILNIALQLVANLAIAFEPFLPFSSEKLRKMLNMETFEWDQLGRTDLLAEGHQLNKAELLFEKIEDETIQAQVDKLLATKKANEAANYKANPIKPVIAFEEFEKLDIRVGTVLECEVVPKMKKLLKFKIADGLENRTIVSGIAQHYKPEELVGKQVLFIANLAPRQFKNGLVSEGMILSAENFDGTLAVTSLLREVKPGSEVK.

The short motif at 15–25 (PYANGPVHIGH) is the 'HIGH' region element. Residues Cys147, Cys150, Cys160, and Cys163 each coordinate Zn(2+). The short motif at 332–336 (KISTS) is the 'KMSKS' region element. Thr335 contributes to the ATP binding site. The region spanning 578–680 (EFEKLDIRVG…REVKPGSEVK (103 aa)) is the tRNA-binding domain.

Belongs to the class-I aminoacyl-tRNA synthetase family. MetG type 1 subfamily. Homodimer. Zn(2+) serves as cofactor.

Its subcellular location is the cytoplasm. It carries out the reaction tRNA(Met) + L-methionine + ATP = L-methionyl-tRNA(Met) + AMP + diphosphate. Is required not only for elongation of protein synthesis but also for the initiation of all mRNA translation through initiator tRNA(fMet) aminoacylation. This Phocaeicola vulgatus (strain ATCC 8482 / DSM 1447 / JCM 5826 / CCUG 4940 / NBRC 14291 / NCTC 11154) (Bacteroides vulgatus) protein is Methionine--tRNA ligase.